A 100-amino-acid chain; its full sequence is UPF0473 protein Csac_1599 (100 aa).

The protein belongs to the UPF0473 family.

This Caldicellulosiruptor saccharolyticus (strain ATCC 43494 / DSM 8903 / Tp8T 6331) protein is UPF0473 protein Csac_1599.